We begin with the raw amino-acid sequence, 372 residues long: Glutamate 5-kinase (372 aa).

Residue lysine 14 participates in ATP binding. Positions 54, 141, and 153 each coordinate substrate. 173–174 is a binding site for ATP; the sequence is TD. The region spanning 280 to 358 is the PUA domain; it reads RGRVVIDGGA…SEIESVLGHL (79 aa).

Belongs to the glutamate 5-kinase family.

It localises to the cytoplasm. The enzyme catalyses L-glutamate + ATP = L-glutamyl 5-phosphate + ADP. Its pathway is amino-acid biosynthesis; L-proline biosynthesis; L-glutamate 5-semialdehyde from L-glutamate: step 1/2. Catalyzes the transfer of a phosphate group to glutamate to form L-glutamate 5-phosphate. In Cupriavidus taiwanensis (strain DSM 17343 / BCRC 17206 / CCUG 44338 / CIP 107171 / LMG 19424 / R1) (Ralstonia taiwanensis (strain LMG 19424)), this protein is Glutamate 5-kinase.